The following is a 962-amino-acid chain: Translation initiation factor IF-2 (962 aa).

Disordered stretches follow at residues 122–263 (EVGV…EPAR), 293–327 (TEEV…TRRK), and 341–362 (IAAQ…AKEP). A compositionally biased stretch (low complexity) spans 156–173 (AVEPQTVVPPVAAPAAEV). The span at 188-202 (KPPEEKETKVKHAEP) shows a compositional bias: basic and acidic residues. Residues 244-256 (RPKKAKKRRRKKV) are compositionally biased toward basic residues. 2 stretches are compositionally biased toward basic and acidic residues: residues 308 to 327 (RPEE…TRRK) and 344 to 362 (QDDR…AKEP). The region spanning 455–624 (RRPPVITVMG…LLQAELLELK (170 aa)) is the tr-type G domain. Residues 464–471 (GHVDHGKT) are G1. Residue 464 to 471 (GHVDHGKT) participates in GTP binding. The segment at 489–493 (GITQH) is G2. The tract at residues 510–513 (DTPG) is G3. GTP is bound by residues 510–514 (DTPGH) and 564–567 (NKVD). The interval 564–567 (NKVD) is G4. Positions 600 to 602 (SAK) are G5.

It belongs to the TRAFAC class translation factor GTPase superfamily. Classic translation factor GTPase family. IF-2 subfamily.

It localises to the cytoplasm. Functionally, one of the essential components for the initiation of protein synthesis. Protects formylmethionyl-tRNA from spontaneous hydrolysis and promotes its binding to the 30S ribosomal subunits. Also involved in the hydrolysis of GTP during the formation of the 70S ribosomal complex. In Syntrophobacter fumaroxidans (strain DSM 10017 / MPOB), this protein is Translation initiation factor IF-2.